The chain runs to 574 residues: Regulatory protein NPR4 (574 aa).

Residues 1-21 (MAATAIEPSSSISFTSSHLSN) are disordered. The segment covering 9-20 (SSSISFTSSHLS) has biased composition (low complexity). Position 11 is a phosphoserine (S11). The 77-residue stretch at 54-130 (TDAEIIIEEE…IYTGRLKPFP (77 aa)) folds into the BTB domain. The C2HC NPR-type zinc-finger motif lies at 133-147 (VSTCVDSVCAHDSCK). Zn(2+) is bound by residues C136, C141, H143, and C146. ANK repeat units lie at residues 252–280 (ERTG…DITL), 281–311 (DQAN…DVNF), and 315–344 (RGYT…NASD). The salicylic acid-binding core (SBC) stretch occupies residues 373 to 516 (EPSKYRLCID…MDQYMDEEIP (144 aa)). R419 provides a ligand contact to salicylate. Residues 521 to 574 (PEKGTVKERRQKRMRYNELKNDVKKAYSKDKVARSCLSSSSPASSLREALENPT) form a disordered region. Basic and acidic residues predominate over residues 535–553 (RYNELKNDVKKAYSKDKVA). Residues 554 to 567 (RSCLSSSSPASSLR) show a composition bias toward low complexity.

This sequence belongs to the plant 'ANKYRIN-BTB/POZ' family. 'NPR1-like' subfamily. As to quaternary structure, forms homodimers, homotetramers and heterodimers with NPR3 in the presence of salicylic acid (SA). Interacts with TGA2, TGA3, TGA5, TGA6 and TGA7. Interacts with CUL3A, a core component of the cullin-RING ubiquitin ligases (CRL). Binds to NPR1; this interaction is disrupted by association with SA, probably due to conformational changes.

Its subcellular location is the nucleus. It functions in the pathway protein modification; protein ubiquitination. Salicylic acid (SA)-binding substrate-specific adapter of an E3 ubiquitin-protein ligase complex (CUL3-RBX1-BTB) which mediates the ubiquitination and subsequent proteasomal degradation of NPR1 in the absence of SA. Together with NPR3, acts as receptor of salicylic acid to monitor immunity in a NPR1-dependent manner and induce systemic acquired resistance (SAR). Involved in the regulation of basal defense responses against pathogens, and may be implicated in the cross-talk between the SA- and JA-dependent signaling pathways. The chain is Regulatory protein NPR4 from Arabidopsis thaliana (Mouse-ear cress).